Consider the following 225-residue polypeptide: Adenosylcobinamide-GDP ribazoletransferase (225 aa).

5 consecutive transmembrane segments (helical) span residues 34–54 (FVGI…FWFL), 93–113 (NLGT…FYSF), 116–136 (VSAF…LLLL), 165–185 (PLLL…AITI), and 204–224 (VVGA…YFLA).

Belongs to the CobS family. It depends on Mg(2+) as a cofactor.

Its subcellular location is the cell membrane. The enzyme catalyses alpha-ribazole + adenosylcob(III)inamide-GDP = adenosylcob(III)alamin + GMP + H(+). It carries out the reaction alpha-ribazole 5'-phosphate + adenosylcob(III)inamide-GDP = adenosylcob(III)alamin 5'-phosphate + GMP + H(+). Its pathway is cofactor biosynthesis; adenosylcobalamin biosynthesis; adenosylcobalamin from cob(II)yrinate a,c-diamide: step 7/7. Its function is as follows. Joins adenosylcobinamide-GDP and alpha-ribazole to generate adenosylcobalamin (Ado-cobalamin). Also synthesizes adenosylcobalamin 5'-phosphate from adenosylcobinamide-GDP and alpha-ribazole 5'-phosphate. This Archaeoglobus fulgidus (strain ATCC 49558 / DSM 4304 / JCM 9628 / NBRC 100126 / VC-16) protein is Adenosylcobinamide-GDP ribazoletransferase (cobS1).